We begin with the raw amino-acid sequence, 852 residues long: Chitin synthase 1 (852 aa).

Disordered stretches follow at residues 27–46 (EDQD…TNYA) and 53–97 (SSLR…QANG). Residues 53 to 74 (SSLRSQKSANKPTTAQNRNSAA) are compositionally biased toward polar residues. The next 7 helical transmembrane spans lie at 492-509 (RWLN…IHFR), 532-552 (VISL…FYFI), 572-592 (IFDF…ICSM), 601-621 (FLFM…LFCS), 686-706 (FLPY…YAFC), 787-807 (THLV…ITTS), and 830-850 (CGLG…GIFT).

The protein belongs to the chitin synthase family. Class II subfamily.

The protein resides in the cell membrane. It catalyses the reaction [(1-&gt;4)-N-acetyl-beta-D-glucosaminyl](n) + UDP-N-acetyl-alpha-D-glucosamine = [(1-&gt;4)-N-acetyl-beta-D-glucosaminyl](n+1) + UDP + H(+). Polymerizes chitin, a structural polymer of the cell wall and septum, by transferring the sugar moiety of UDP-GlcNAc to the non-reducing end of the growing chitin polymer. The sequence is that of Chitin synthase 1 (CHS1) from Mucor circinelloides f. lusitanicus (Mucor racemosus var. lusitanicus).